The primary structure comprises 316 residues: Ribose-phosphate pyrophosphokinase (316 aa).

ATP is bound by residues 41 to 43 (DGE) and 100 to 101 (RQ). Positions 134 and 175 each coordinate Mg(2+). The active site involves Lys198. Residues Arg200, Asp224, and 228 to 232 (DTARS) contribute to the D-ribose 5-phosphate site.

Belongs to the ribose-phosphate pyrophosphokinase family. Class I subfamily. Homohexamer. Mg(2+) is required as a cofactor.

The protein localises to the cytoplasm. It carries out the reaction D-ribose 5-phosphate + ATP = 5-phospho-alpha-D-ribose 1-diphosphate + AMP + H(+). The protein operates within metabolic intermediate biosynthesis; 5-phospho-alpha-D-ribose 1-diphosphate biosynthesis; 5-phospho-alpha-D-ribose 1-diphosphate from D-ribose 5-phosphate (route I): step 1/1. Involved in the biosynthesis of the central metabolite phospho-alpha-D-ribosyl-1-pyrophosphate (PRPP) via the transfer of pyrophosphoryl group from ATP to 1-hydroxyl of ribose-5-phosphate (Rib-5-P). The chain is Ribose-phosphate pyrophosphokinase from Thermosipho africanus (strain TCF52B).